A 267-amino-acid chain; its full sequence is Hydroxyethylthiazole kinase (267 aa).

Met46 is a substrate binding site. Residues Arg122 and Ser168 each contribute to the ATP site. Position 195 (Gly195) interacts with substrate.

Belongs to the Thz kinase family. Requires Mg(2+) as cofactor.

The enzyme catalyses 5-(2-hydroxyethyl)-4-methylthiazole + ATP = 4-methyl-5-(2-phosphooxyethyl)-thiazole + ADP + H(+). It functions in the pathway cofactor biosynthesis; thiamine diphosphate biosynthesis; 4-methyl-5-(2-phosphoethyl)-thiazole from 5-(2-hydroxyethyl)-4-methylthiazole: step 1/1. Functionally, catalyzes the phosphorylation of the hydroxyl group of 4-methyl-5-beta-hydroxyethylthiazole (THZ). The chain is Hydroxyethylthiazole kinase from Nitratidesulfovibrio vulgaris (strain DSM 19637 / Miyazaki F) (Desulfovibrio vulgaris).